We begin with the raw amino-acid sequence, 153 residues long: Interleukin-4 (153 aa).

A signal peptide spans 1-24 (MGLTSQLLPPLFFLLACAGNFAHG). Disulfide bonds link C27–C151, C48–C89, and C70–C123. The N-linked (GlcNAc...) asparagine glycan is linked to N62.

It belongs to the IL-4/IL-13 family.

It localises to the secreted. Participates in at least several B-cell activation processes as well as of other cell types. It is a costimulator of DNA-synthesis. It induces the expression of class II MHC molecules on resting B-cells. It enhances both secretion and cell surface expression of IgE and IgG1. It also regulates the expression of the low affinity Fc receptor for IgE (CD23) on both lymphocytes and monocytes. Positively regulates IL31RA expression in macrophages. Stimulates autophagy in dendritic cells by interfering with mTORC1 signaling and through the induction of RUFY4. The polypeptide is Interleukin-4 (IL4) (Papio anubis (Olive baboon)).